The primary structure comprises 100 residues: Omega toxin Ap2 (100 aa).

A signal peptide spans 1-22; that stretch reads MNTTQVILFAVVLVLTVTVGQA. Positions 23-57 are excised as a propeptide; sequence DEDSAETSLLRKLEEAEASMFGQYLEESKNSPEQR. 3 cysteine pairs are disulfide-bonded: C58–C74, C65–C79, and C73–C94. Residue S99 is modified to Serine amide.

Belongs to the neurotoxin 14 (magi-1) family. 08 (Ltx-4) subfamily. In terms of tissue distribution, expressed by the venom duct.

It localises to the secreted. Functionally, inhibits 31.17% of Cav2.1/CACNA1A current at 1 uM concentration. The polypeptide is Omega toxin Ap2 (Acanthoscurria paulensis (Brazilian giant black tarantula spider)).